The chain runs to 295 residues: Ethanolamine ammonia-lyase small subunit (295 aa).

Residues V207, E228, and C258 each contribute to the adenosylcob(III)alamin site.

Belongs to the EutC family. The basic unit is a heterodimer which dimerizes to form tetramers. The heterotetramers trimerize; 6 large subunits form a core ring with 6 small subunits projecting outwards. It depends on adenosylcob(III)alamin as a cofactor.

It is found in the bacterial microcompartment. It carries out the reaction ethanolamine = acetaldehyde + NH4(+). Its pathway is amine and polyamine degradation; ethanolamine degradation. Functionally, catalyzes the deamination of various vicinal amino-alcohols to oxo compounds. Allows this organism to utilize ethanolamine as the sole source of nitrogen and carbon in the presence of external vitamin B12. In Escherichia coli (strain SE11), this protein is Ethanolamine ammonia-lyase small subunit.